We begin with the raw amino-acid sequence, 799 residues long: Ribosome-releasing factor 2, mitochondrial (799 aa).

A tr-type G domain is found at serine 19–leucine 306. GTP contacts are provided by residues alanine 28–threonine 35, aspartate 93–histidine 97, and asparagine 145–aspartate 148.

It belongs to the TRAFAC class translation factor GTPase superfamily. Classic translation factor GTPase family. EF-G/EF-2 subfamily.

It localises to the mitochondrion. Functionally, mitochondrial GTPase that mediates the disassembly of ribosomes from messenger RNA at the termination of mitochondrial protein biosynthesis. Not involved in the GTP-dependent ribosomal translocation step during translation elongation. The protein is Ribosome-releasing factor 2, mitochondrial of Vanderwaltozyma polyspora (strain ATCC 22028 / DSM 70294 / BCRC 21397 / CBS 2163 / NBRC 10782 / NRRL Y-8283 / UCD 57-17) (Kluyveromyces polysporus).